A 583-amino-acid chain; its full sequence is J protein JJJ2 (583 aa).

One can recognise a J domain in the interval 11 to 79 (RTTYYSILGL…KLRYDRDLKI (69 aa)). Over residues 215–224 (SYSEDPNSCL) the composition is skewed to polar residues. The tract at residues 215–313 (SYSEDPNSCL…SGSHDSNLQS (99 aa)) is disordered. Residue Ser229 is modified to Phosphoserine. The segment covering 240-252 (QQQQQQQQQQQQQ) has biased composition (low complexity). Basic and acidic residues predominate over residues 262–281 (SPDEEKKNNKEPKRESRVSP). A compositionally biased stretch (polar residues) spans 298-313 (KTSTFSSGSHDSNLQS).

The protein resides in the cytoplasm. It localises to the nucleus. The polypeptide is J protein JJJ2 (JJJ2) (Saccharomyces cerevisiae (strain ATCC 204508 / S288c) (Baker's yeast)).